We begin with the raw amino-acid sequence, 162 residues long: Iron-sulfur cluster assembly protein IscU (162 aa).

It belongs to the NifU family. Homotrimer. Small proportion is monomeric. Interacts with IscS. Interacts with ABCB6. Component of a complex, at least composed of IscS, Isd11 and IscU. Requires [4Fe-4S] cluster as cofactor.

The protein resides in the mitochondrion. It participates in cofactor biosynthesis; iron-sulfur cluster biosynthesis. Its function is as follows. Participates in iron-sulfur cluster formation (ISC) pathway for iron-sulfur (Fe-S) cluster biogenesis. Plays a role of a major scaffold protein for [Fe-S] assembly; assembles [4Fe-4S] clusters directly upon interaction with the catalytic component IscS-Isd11 as part of the scaffold complex. Can transfer [4Fe-4S] clusters to target apo-proteins. The sequence is that of Iron-sulfur cluster assembly protein IscU from Plasmodium falciparum (isolate 3D7).